The chain runs to 190 residues: UPF0301 protein DP2218 (190 aa).

Belongs to the UPF0301 (AlgH) family.

The polypeptide is UPF0301 protein DP2218 (Desulfotalea psychrophila (strain LSv54 / DSM 12343)).